The following is a 142-amino-acid chain: Large ribosomal subunit protein uL11 (142 aa).

This sequence belongs to the universal ribosomal protein uL11 family. As to quaternary structure, part of the ribosomal stalk of the 50S ribosomal subunit. Interacts with L10 and the large rRNA to form the base of the stalk. L10 forms an elongated spine to which L12 dimers bind in a sequential fashion forming a multimeric L10(L12)X complex. In terms of processing, one or more lysine residues are methylated.

Forms part of the ribosomal stalk which helps the ribosome interact with GTP-bound translation factors. This Beijerinckia indica subsp. indica (strain ATCC 9039 / DSM 1715 / NCIMB 8712) protein is Large ribosomal subunit protein uL11.